Here is an 895-residue protein sequence, read N- to C-terminus: Pyruvate dehydrogenase E1 component (895 aa).

The segment at 1–20 is disordered; sequence MSAVPEQILGASSANDADPQ.

As to quaternary structure, homodimer. Part of the PDH complex, consisting of multiple copies of pyruvate dehydrogenase (E1), dihydrolipoamide acetyltransferase (E2) and lipoamide dehydrogenase (E3). Requires thiamine diphosphate as cofactor.

The enzyme catalyses N(6)-[(R)-lipoyl]-L-lysyl-[protein] + pyruvate + H(+) = N(6)-[(R)-S(8)-acetyldihydrolipoyl]-L-lysyl-[protein] + CO2. Functionally, component of the pyruvate dehydrogenase (PDH) complex, that catalyzes the overall conversion of pyruvate to acetyl-CoA and CO(2). This is Pyruvate dehydrogenase E1 component (pdhA) from Cupriavidus necator (strain ATCC 17699 / DSM 428 / KCTC 22496 / NCIMB 10442 / H16 / Stanier 337) (Ralstonia eutropha).